The chain runs to 138 residues: Cytochrome b5 (138 aa).

Residues 14–90 (GRYYRLEEVQ…SETFIIGELH (77 aa)) enclose the Cytochrome b5 heme-binding domain. Residues histidine 49 and histidine 73 each contribute to the heme site. The helical transmembrane segment at 114–136 (SWSNWVIPAIAAIIVALMYRSYM) threads the bilayer.

Belongs to the cytochrome b5 family.

Its subcellular location is the endoplasmic reticulum membrane. The protein localises to the microsome membrane. Its function is as follows. Cytochrome b5 is a membrane-bound hemoprotein functioning as an electron carrier for several membrane-bound oxygenases. This chain is Cytochrome b5 (CYB5A), found in Gallus gallus (Chicken).